Consider the following 517-residue polypeptide: tRNA-2-methylthio-N(6)-dimethylallyladenosine synthase (517 aa).

The region spanning arginine 29–histidine 146 is the MTTase N-terminal domain. 6 residues coordinate [4Fe-4S] cluster: cysteine 38, cysteine 75, cysteine 109, cysteine 183, cysteine 187, and cysteine 190. Positions arginine 169–glutamine 405 constitute a Radical SAM core domain. Positions glutamine 408–valine 475 constitute a TRAM domain.

Belongs to the methylthiotransferase family. MiaB subfamily. As to quaternary structure, monomer. The cofactor is [4Fe-4S] cluster.

The protein resides in the cytoplasm. It carries out the reaction N(6)-dimethylallyladenosine(37) in tRNA + (sulfur carrier)-SH + AH2 + 2 S-adenosyl-L-methionine = 2-methylsulfanyl-N(6)-dimethylallyladenosine(37) in tRNA + (sulfur carrier)-H + 5'-deoxyadenosine + L-methionine + A + S-adenosyl-L-homocysteine + 2 H(+). Its function is as follows. Catalyzes the methylthiolation of N6-(dimethylallyl)adenosine (i(6)A), leading to the formation of 2-methylthio-N6-(dimethylallyl)adenosine (ms(2)i(6)A) at position 37 in tRNAs that read codons beginning with uridine. In Mycolicibacterium paratuberculosis (strain ATCC BAA-968 / K-10) (Mycobacterium paratuberculosis), this protein is tRNA-2-methylthio-N(6)-dimethylallyladenosine synthase.